The sequence spans 422 residues: Carboxypeptidase B2 (422 aa).

An N-terminal signal peptide occupies residues 1 to 21; the sequence is MKLHGLGILVAIILYEQHGFA. The propeptide at 22-113 is activation peptide; it reads FQSGQVLSAL…QTFNDTVSPR (92 aa). N-linked (GlcNAc...) asparagine glycans are attached at residues Asn43, Asn72, Asn84, and Asn107. Residues 121–418 form the Peptidase M14 domain; sequence QYHSLNEIYS…AAISKIVWHV (298 aa). A disulfide bridge connects residues Cys177 and Cys190. Zn(2+) contacts are provided by His180 and Glu183. Residues 180–183 and Arg238 each bind substrate; that span reads HARE. N-linked (GlcNAc...) asparagine glycosylation is present at Asn240. Cystine bridges form between Cys249–Cys273 and Cys264–Cys278. 255 to 256 is a binding site for substrate; the sequence is NR. His309 is a binding site for Zn(2+). 310-311 lines the substrate pocket; sequence SY. N-linked (GlcNAc...) asparagine glycosylation occurs at Asn322. Tyr362 provides a ligand contact to substrate. The Proton donor/acceptor role is filled by Glu384.

The protein belongs to the peptidase M14 family. Zn(2+) is required as a cofactor. As to expression, plasma; synthesized in the liver.

Its subcellular location is the secreted. It carries out the reaction Release of C-terminal Arg and Lys from a polypeptide.. With respect to regulation, TAFI/CPB2 is unique among carboxypeptidases in that it spontaneously inactivates with a short half-life, a property that is crucial for its role in controlling blood clot lysis. The zymogen is stabilized by interactions with the activation peptide. Release of the activation peptide increases a dynamic flap mobility and in time this leads to conformational changes that disrupt the catalytic site and expose a cryptic thrombin-cleavage site present at Arg-323. Its function is as follows. Cleaves C-terminal arginine or lysine residues from biologically active peptides such as kinins or anaphylatoxins in the circulation thereby regulating their activities. Down-regulates fibrinolysis by removing C-terminal lysine residues from fibrin that has already been partially degraded by plasmin. The sequence is that of Carboxypeptidase B2 (Cpb2) from Mus musculus (Mouse).